We begin with the raw amino-acid sequence, 178 residues long: Endothelin-2 (178 aa).

An N-terminal signal peptide occupies residues 1-26; it reads MVAMPTAWCSIALALLLALHEGKGQV. The propeptide occupies 27–46; sequence AAAPDQPAPSHRARASHLRP. Disulfide bonds link cysteine 49–cysteine 63 and cysteine 51–cysteine 59. Positions 70–178 are excised as a propeptide; the sequence is VNTPGQTAPY…RPTHSRRWKR (109 aa). An endothelin-like region spans residues 96–111; sequence CECSSGRDPACATFCH.

This sequence belongs to the endothelin/sarafotoxin family.

Its subcellular location is the secreted. Endothelins are endothelium-derived vasoconstrictor peptides. The sequence is that of Endothelin-2 (EDN2) from Felis catus (Cat).